Consider the following 131-residue polypeptide: Methylglyoxal synthase (131 aa).

One can recognise an MGS-like domain in the interval 1–131; it reads MKIALIAHDK…GDLDYRKLRK (131 aa). Substrate-binding positions include His8, Lys12, 34–37, and 54–55; these read TGTT and SG. Asp60 acts as the Proton donor/acceptor in catalysis. Position 87 (His87) interacts with substrate.

This sequence belongs to the methylglyoxal synthase family.

It catalyses the reaction dihydroxyacetone phosphate = methylglyoxal + phosphate. In terms of biological role, catalyzes the formation of methylglyoxal from dihydroxyacetone phosphate. In Bacillus cereus (strain ATCC 10987 / NRS 248), this protein is Methylglyoxal synthase.